The following is a 740-amino-acid chain: Cell death abnormality protein 12 (740 aa).

In terms of domain architecture, ELMO spans 348–494 (SEIQKVLDID…FVLEQLRHVL (147 aa)). A required for punctate localization, cell corpse engulfment and distal cell tip migration region spans residues 555–690 (INHLNYLKKG…ESLAYLVGNT (136 aa)). An SH3-binding motif is present at residues 724–727 (PDVP).

In terms of assembly, interacts with psr-1. Forms a ternary complex with ced-2 and ced-5.

Its subcellular location is the cytoplasm. Functionally, involved in apoptosis and necrosis. Required for the cell corpse engulfment process. Has roles in the formation of actin halos and distal tip cell migration. Plays no role in amphid axon outgrowth. This chain is Cell death abnormality protein 12, found in Caenorhabditis briggsae.